Reading from the N-terminus, the 291-residue chain is MGTRIDGKKVAARTKADLAKRVELLKARGIQPGLGTILVGSDPGSVKYVAGKHADCAEIGVNSIKRELPENATFDQVADAVRQLNADPACTGYIVQLPLPRGIDENAIIDLIDPKKDADGMHPYNLGELVLHARGDITTPLPCTPRGVIELLRAYDIDLDGKEVCVLGRGITIGRTIGLLLTRKAVNATVTLCHTGTKDVRDHMRRADVIVAAMGVAGFVKPEDIKEGSILVDVGVSRVFDEESGRYKVKGDVDKACYEKAFAYTPNPGGVGPMTRAMLLQNVVEMAERQL.

NADP(+)-binding positions include 168 to 170 (GRG), T195, and V236.

The protein belongs to the tetrahydrofolate dehydrogenase/cyclohydrolase family. Homodimer.

The catalysed reaction is (6R)-5,10-methylene-5,6,7,8-tetrahydrofolate + NADP(+) = (6R)-5,10-methenyltetrahydrofolate + NADPH. It catalyses the reaction (6R)-5,10-methenyltetrahydrofolate + H2O = (6R)-10-formyltetrahydrofolate + H(+). It participates in one-carbon metabolism; tetrahydrofolate interconversion. Catalyzes the oxidation of 5,10-methylenetetrahydrofolate to 5,10-methenyltetrahydrofolate and then the hydrolysis of 5,10-methenyltetrahydrofolate to 10-formyltetrahydrofolate. This is Bifunctional protein FolD from Bifidobacterium adolescentis (strain ATCC 15703 / DSM 20083 / NCTC 11814 / E194a).